The primary structure comprises 397 residues: MLRWLCLYSALCALTHGSSARSLEWFTALVRTEYTEPLTNSSVTGSTESGRYGDSSPKESVKGFVGYPRDPWQLEGCHPDTQYIVPGTSAAAAAGPDSEWTQPWIALVARGGCTFKEKVFNAANRGASAVVIYNEAKSGNATVSMSHLGTGNTVVIMVSYPKGMEIMEPLRRDIPVKMVITVGTRHVQEFISGQSVVFVAIAFITMMIISLAWLIFYYIQRFLYTGAQCGNQSNRKETKKAISQLQLHRVKKGEKGIDIDAENCAVCIENYKTKDLVRILPCKHIFHRLCIDPWLIEHRTCPMCKLDVIKALGFWVEPEETLDIHVPDSIAGSSLSIGTVSITQEESRSEGNNLPSSSTGSSLQQSNSVKDDAGETTALLDDPGNDNAAATHTQDSH.

Positions 1 to 20 (MLRWLCLYSALCALTHGSSA) are cleaved as a signal peptide. A compositionally biased stretch (polar residues) spans 39-49 (TNSSVTGSTES). The disordered stretch occupies residues 39-60 (TNSSVTGSTESGRYGDSSPKES). 2 N-linked (GlcNAc...) asparagine glycosylation sites follow: N40 and N140. The PA domain maps to 83 to 170 (YIVPGTSAAA…PKGMEIMEPL (88 aa)). The chain crosses the membrane as a helical span at residues 196–216 (VVFVAIAFITMMIISLAWLIF). N231 carries N-linked (GlcNAc...) asparagine glycosylation. The RING-type; atypical zinc-finger motif lies at 264-305 (CAVCIENYKTKDLVRILPCKHIFHRLCIDPWLIEHRTCPMCK). Positions 341–397 (SITQEESRSEGNNLPSSSTGSSLQQSNSVKDDAGETTALLDDPGNDNAAATHTQDSH) are disordered. A compositionally biased stretch (low complexity) spans 351 to 368 (GNNLPSSSTGSSLQQSNS). Residues 388–397 (AAATHTQDSH) are compositionally biased toward polar residues.

The protein localises to the membrane. The catalysed reaction is S-ubiquitinyl-[E2 ubiquitin-conjugating enzyme]-L-cysteine + [acceptor protein]-L-lysine = [E2 ubiquitin-conjugating enzyme]-L-cysteine + N(6)-ubiquitinyl-[acceptor protein]-L-lysine.. The protein operates within protein modification; protein ubiquitination. In terms of biological role, E3 ubiquitin-protein ligase. Ubiquitinates BRAF, inducing its proteasomal degradation. In Xenopus laevis (African clawed frog), this protein is E3 ubiquitin-protein ligase RNF149 (rnf149).